The sequence spans 424 residues: Histidinol dehydrogenase (424 aa).

3 residues coordinate NAD(+): tyrosine 127, glutamine 188, and asparagine 211. Residues serine 234, glutamine 256, and histidine 259 each coordinate substrate. Positions 256 and 259 each coordinate Zn(2+). Active-site proton acceptor residues include glutamate 322 and histidine 323. Substrate-binding residues include histidine 323, aspartate 356, glutamate 410, and histidine 415. Aspartate 356 provides a ligand contact to Zn(2+). Histidine 415 contacts Zn(2+).

The protein belongs to the histidinol dehydrogenase family. The cofactor is Zn(2+).

The catalysed reaction is L-histidinol + 2 NAD(+) + H2O = L-histidine + 2 NADH + 3 H(+). The protein operates within amino-acid biosynthesis; L-histidine biosynthesis; L-histidine from 5-phospho-alpha-D-ribose 1-diphosphate: step 9/9. Catalyzes the sequential NAD-dependent oxidations of L-histidinol to L-histidinaldehyde and then to L-histidine. This is Histidinol dehydrogenase from Methanococcus maripaludis (strain DSM 14266 / JCM 13030 / NBRC 101832 / S2 / LL).